The primary structure comprises 68 residues: Frenatin-3 (68 aa).

The first 22 residues, 1-22 (MHFLKKSIFLVLFLGLVSLSIC), serve as a signal peptide directing secretion. A propeptide spanning residues 23–46 (EKEKREDQNEEEVDENEEESEEKR) is cleaved from the precursor. A disordered region spans residues 26 to 47 (KREDQNEEEVDENEEESEEKRG). Residues 30–42 (QNEEEVDENEEES) show a composition bias toward acidic residues.

It belongs to the frog skin active peptide (FSAP) family. Frenatin subfamily. Expressed by the granular skin glands.

It is found in the secreted. Antimicrobial peptide with activity against both Gram-positive and Gram-negative bacteria. Antibacterial activities have been tested against Bacillus cereus (MIC=12.5 ug/ml), Escherichia coli (MIC=50 ug/ml), Leuconostoc mesenteroides (MIC=25 ug/ml), Micrococcus luteus (MIC=1.5 ug/ml), Pastewella haemolytica (MIC=0.8 ug/ml), Staphylococcus aureus (MIC&lt;l00 ug/ml), Streptococcus faecalis (MIC&lt;150 ug/ml) and Streptococcus uberis (MIC=50 ug/ml). Strongly inhibits the formation of NO by neuronal nitric oxide synthase (nNOS) at micromolar concentrations. Acts by a non-competitive mechanism, probably by binding to calcium/calmodulin and as a consequence blocking calmodulin attachment to nNOS. This is Frenatin-3 from Nyctimystes infrafrenatus (White-lipped tree frog).